We begin with the raw amino-acid sequence, 815 residues long: MADDRQLVDEISAATTLELPVLPLINTVLFPTMVTPLFVARELSMAAIEAAMSADRQIVAVAQRAIEIEEHDTSQLYQVGVIAHIERVLKLPDGTTSVLVQGQQRVQIVDWLATEPYINAQVQIIEPDHESSLAIEAMMRGVLASYEKVVKLSRTMPDDAYVAALNLEDASALADLIASTLPLDIVRRQQLLELFEVEERLRRLSVVLSQEIDVLELEHHIQNQVQKEVDKSQRDFFLREQLKAIQTELGQEDPLTRELNELHDRIVAANLPAKAQAKALEELGRLEMMPPAAPEYSVIRTYLDWLLELPWSKTSADVADLEVAAKVLENNHYGLKKVKERILEFIAVRMLAGDSTKSPILCFVGPPGVGKTSLGRSVAEALGREFVRLSLGGVHDEAEIRGHRRTYIGAMPGRIIQTMKDAGTINPVFMLDEIDKLGNDFRGDPAAALLEVLDPEQNNTFADHYLDLPYDLSKIMFITTANMLDPIDEPLLDRMEIVELPGYIEEEKVQIARKFLIPKQIEANGLKQHPITISDEALRQIIRTYTWEAGVRNLEREIGGICRKIARRVAEKKRYPRRITPTMLTDFLGQPPFDYSRANDRDEIGVATGMVWSSNGGDVVAIETAIVDGKGTTTLTGQLGDVMQESAQAALSYARASSRRLGIDGKRFEKIDIHIHVPEGGVPKDGPSAGITLACSVISALTHRPLRRDVAMTGEITLRGRVLPIGGLRDKILGAYRAGITTMLIPKKNLRDLEEVPNNVRRQITVVAVEHMDEVLPIAFVSNPLERGSQHTSDGDQTSVVLPTITQPQLGSVEL.

The 194-residue stretch at 19–212 folds into the Lon N-terminal domain; sequence LPVLPLINTV…RLSVVLSQEI (194 aa). Position 365 to 372 (365 to 372) interacts with ATP; sequence GPPGVGKT. The region spanning 601–782 is the Lon proteolytic domain; it reads RDEIGVATGM…DEVLPIAFVS (182 aa). Catalysis depends on residues serine 688 and lysine 731.

The protein belongs to the peptidase S16 family. Homohexamer. Organized in a ring with a central cavity.

It is found in the cytoplasm. It catalyses the reaction Hydrolysis of proteins in presence of ATP.. ATP-dependent serine protease that mediates the selective degradation of mutant and abnormal proteins as well as certain short-lived regulatory proteins. Required for cellular homeostasis and for survival from DNA damage and developmental changes induced by stress. Degrades polypeptides processively to yield small peptide fragments that are 5 to 10 amino acids long. Binds to DNA in a double-stranded, site-specific manner. This Herpetosiphon aurantiacus (strain ATCC 23779 / DSM 785 / 114-95) protein is Lon protease 2.